Reading from the N-terminus, the 25-residue chain is MLDIFILMFFAIIGLVILSYIIYLL.

A helical transmembrane segment spans residues isoleucine 4–leucine 24.

It is found in the membrane. Functionally, may play a key role in the skin fibroblasts (FBs)-keratinocyte-like cells (KLCs). The protein is LASP1 neighbor protein of Homo sapiens (Human).